The following is a 133-amino-acid chain: DNA-directed RNA polymerases I, II, and III subunit rpabc2 (133 aa).

A compositionally biased stretch (acidic residues) spans 1–32; that stretch reads MADFEGGGDDGGYEEFDEGGGFEEEYVEETET. Positions 1-55 are disordered; sequence MADFEGGGDDGGYEEFDEGGGFEEEYVEETETTEAYTDIIDPSADANTAEAGRIP.

It belongs to the archaeal Rpo6/eukaryotic RPB6 RNA polymerase subunit family. As to quaternary structure, component of the RNA polymerase I (Pol I), RNA polymerase II (Pol II) and RNA polymerase III (Pol III) complexes consisting of at least 13, 12 and 17 subunits, respectively.

The protein localises to the nucleus. Functionally, DNA-dependent RNA polymerases catalyze the transcription of DNA into RNA using the four ribonucleoside triphosphates as substrates. Common component of RNA polymerases I, II and III which synthesize ribosomal RNA precursors, mRNA precursors and many functional non-coding RNAs, and small RNAs, such as 5S rRNA and tRNAs, respectively. Pol II is the central component of the basal RNA polymerase II transcription machinery. Pols are composed of mobile elements that move relative to each other. In Pol II, RPB6 is part of the clamp element and together with parts of RPB1 and RPB2 forms a pocket to which the RPB4-RPB7 subcomplex binds. This Dictyostelium discoideum (Social amoeba) protein is DNA-directed RNA polymerases I, II, and III subunit rpabc2 (polr2f).